A 367-amino-acid chain; its full sequence is uncharacterized protein (367 aa).

A helical membrane pass occupies residues 8-28; the sequence is VLIGTFVLAAILAVFGFIYWL.

Its subcellular location is the membrane. This is an uncharacterized protein from Bradyrhizobium diazoefficiens (strain JCM 10833 / BCRC 13528 / IAM 13628 / NBRC 14792 / USDA 110).